The sequence spans 303 residues: uncharacterized protein (303 aa).

This is an uncharacterized protein from Bacillus subtilis (strain 168).